A 123-amino-acid polypeptide reads, in one-letter code: NADH-quinone oxidoreductase subunit A (123 aa).

3 helical membrane passes run 6–26, 66–86, and 93–113; these read LTPY…AMLI, VVAL…PWAV, and WFGY…LIYI.

Belongs to the complex I subunit 3 family. NDH-1 is composed of 14 different subunits. Subunits NuoA, H, J, K, L, M, N constitute the membrane sector of the complex.

It localises to the cell inner membrane. The enzyme catalyses a quinone + NADH + 5 H(+)(in) = a quinol + NAD(+) + 4 H(+)(out). NDH-1 shuttles electrons from NADH, via FMN and iron-sulfur (Fe-S) centers, to quinones in the respiratory chain. The immediate electron acceptor for the enzyme in this species is believed to be ubiquinone. Couples the redox reaction to proton translocation (for every two electrons transferred, four hydrogen ions are translocated across the cytoplasmic membrane), and thus conserves the redox energy in a proton gradient. The protein is NADH-quinone oxidoreductase subunit A of Myxococcus xanthus (strain DK1622).